Here is a 101-residue protein sequence, read N- to C-terminus: MRGLAVLLLVACFCSVAFGDCENTECPRACPGEYEFDEDGCNTCLCKGCNDAQCRIYCPLGFTTDANGCESFCTCNTRETVCQNVVCSGKRVCNPRSGRCE.

An N-terminal signal peptide occupies residues 1–19; sequence MRGLAVLLLVACFCSVAFG. 2 Antistasin-like domains span residues 21–46 and 49–75; these read CENT…TCLC and CNDA…FCTC.

In terms of tissue distribution, salivary glands.

Its subcellular location is the secreted. Functionally, potent inhibitor of factor Xa. It also inhibits trypsin in a weaker manner. This Theromyzon tessulatum (Duck leech) protein is Therostasin.